A 227-amino-acid chain; its full sequence is MKKSVNLLSGGTDSATVLAIASEMCYEIYAMSFNYGQRNNAELRKVKELIKKYNVKQHKIVDIDLRAFGGSALTDDNIDVPYYHGINALPEIVPVTYVPARNTIFLSYAVGFAEVIGSQDIFIGVHTSDSANYPDCCPEYIQSFEKMVNLATNMGVQGKKITIHAPLIDMTKEQIIRTGLKLGVDYKNTISCYSPTEDDLSCGNCLACIIRLDAFKKNNIQDPIKYV.

An ATP-binding site is contributed by 8–18; it reads LSGGTDSATVL. C192, C202, C205, and C208 together coordinate Zn(2+).

This sequence belongs to the QueC family. It depends on Zn(2+) as a cofactor.

The catalysed reaction is 7-carboxy-7-deazaguanine + NH4(+) + ATP = 7-cyano-7-deazaguanine + ADP + phosphate + H2O + H(+). The protein operates within purine metabolism; 7-cyano-7-deazaguanine biosynthesis. In terms of biological role, catalyzes the ATP-dependent conversion of 7-carboxy-7-deazaguanine (CDG) to 7-cyano-7-deazaguanine (preQ(0)). This is 7-cyano-7-deazaguanine synthase from Rickettsia prowazekii (strain Madrid E).